The primary structure comprises 344 residues: uncharacterized protein (344 aa).

8 helical membrane passes run 25 to 45 (GAGWACGVTVVLPPPGTVGAV), 68 to 88 (FVDALLLAGGSAYGLAAADGV), 104 to 124 (GVVPIVPGAVIFDLPVGGWNC), 133 to 153 (SACAAAGVDVAVGTVGVGVGA), 161 to 181 (GVGTASATLQSGVTVGVLAVV), 224 to 244 (LGAFNTPFNTTIGVIACDAAL), 276 to 296 (VFALATGAVAVPPEAGVPAAL), and 302 to 322 (LVTAVGAAAADCLARAVLAGV).

The protein belongs to the peptidase S58 family.

It is found in the cell membrane. Aminopeptidase. This is an uncharacterized protein from Mycobacterium bovis (strain ATCC BAA-935 / AF2122/97).